The chain runs to 315 residues: ATP synthase gamma chain (315 aa).

As to quaternary structure, F-type ATPases have 2 components, CF(1) - the catalytic core - and CF(0) - the membrane proton channel. CF(1) has five subunits: alpha(3), beta(3), gamma(1), delta(1), epsilon(1). CF(0) has four main subunits: a(1), b(1), b'(1) and c(9-12).

The protein resides in the cellular thylakoid membrane. Its function is as follows. Produces ATP from ADP in the presence of a proton gradient across the membrane. The gamma chain is believed to be important in regulating ATPase activity and the flow of protons through the CF(0) complex. In terms of biological role, the complex from the organism is particularly stable to disruption and remains functional after 6 hrs at 55 degrees Celsius. The protein is ATP synthase gamma chain of Thermosynechococcus vestitus (strain NIES-2133 / IAM M-273 / BP-1).